The primary structure comprises 217 residues: Nascent polypeptide-associated complex subunit alpha (217 aa).

A disordered region spans residues 1–45 (MPELTEIKSEAAPSTSAEAKPEDVRVEDDGSDSDSDGGMPGLEEA). Over residues 19–28 (AKPEDVRVED) the composition is skewed to basic and acidic residues. In terms of domain architecture, NAC-A/B spans 70–135 (SRGEKKARKI…AKIEDLSQQA (66 aa)). A disordered region spans residues 154-177 (SVGATTSVAPIAEEDEEDVDDTGV). A compositionally biased stretch (acidic residues) spans 165-176 (AEEDEEDVDDTG). Positions 177–217 (VDEKDIELVITQANTTRAKAIKALKNNNNDIVNAIMELTML) constitute a UBA domain.

Belongs to the NAC-alpha family. Part of the nascent polypeptide-associated complex (NAC), consisting of Nac-alpha and bicaudal (bic).

In terms of biological role, may promote appropriate targeting of ribosome-nascent polypeptide complexes. Required for correct localization of the osk/oskar protein to the posterior pole during embryonic development. The osk protein directs the recruitment of molecules responsible for posterior body patterning and germline formation in the embryo. This Drosophila melanogaster (Fruit fly) protein is Nascent polypeptide-associated complex subunit alpha (Nacalpha).